We begin with the raw amino-acid sequence, 167 residues long: Lipoprotein signal peptidase (167 aa).

The next 4 helical transmembrane spans lie at 8-28 (TFLT…VVLL), 46-66 (WGHF…FGLF), 68-88 (QYKI…ALFL), and 101-121 (IALT…LLHG). Residues Asp-125 and Asp-143 contribute to the active site. Residues 139–159 (FNLADAFISIGTLLLIGHLYF) traverse the membrane as a helical segment.

Belongs to the peptidase A8 family.

The protein resides in the cell inner membrane. It carries out the reaction Release of signal peptides from bacterial membrane prolipoproteins. Hydrolyzes -Xaa-Yaa-Zaa-|-(S,diacylglyceryl)Cys-, in which Xaa is hydrophobic (preferably Leu), and Yaa (Ala or Ser) and Zaa (Gly or Ala) have small, neutral side chains.. It functions in the pathway protein modification; lipoprotein biosynthesis (signal peptide cleavage). In terms of biological role, this protein specifically catalyzes the removal of signal peptides from prolipoproteins. The protein is Lipoprotein signal peptidase of Chlamydia trachomatis serovar L2b (strain UCH-1/proctitis).